A 206-amino-acid chain; its full sequence is Large ribosomal subunit protein uL4 (206 aa).

Residues 47–94 (NRAQKDRSEINKSTKKPFRQKGTGRARAGRASSPLWRGGGKVFPNSPD) form a disordered region. Residues 49 to 58 (AQKDRSEINK) are compositionally biased toward basic and acidic residues. Over residues 59–74 (STKKPFRQKGTGRARA) the composition is skewed to basic residues.

It belongs to the universal ribosomal protein uL4 family. Part of the 50S ribosomal subunit.

Functionally, one of the primary rRNA binding proteins, this protein initially binds near the 5'-end of the 23S rRNA. It is important during the early stages of 50S assembly. It makes multiple contacts with different domains of the 23S rRNA in the assembled 50S subunit and ribosome. Forms part of the polypeptide exit tunnel. The sequence is that of Large ribosomal subunit protein uL4 from Laribacter hongkongensis (strain HLHK9).